We begin with the raw amino-acid sequence, 191 residues long: Potassium-transporting ATPase KdpC subunit (191 aa).

The helical transmembrane segment at 11 to 31 (LFVLLTAVTGVVYPLAVTGIA) threads the bilayer.

Belongs to the KdpC family. The system is composed of three essential subunits: KdpA, KdpB and KdpC.

The protein resides in the cell inner membrane. Part of the high-affinity ATP-driven potassium transport (or Kdp) system, which catalyzes the hydrolysis of ATP coupled with the electrogenic transport of potassium into the cytoplasm. This subunit acts as a catalytic chaperone that increases the ATP-binding affinity of the ATP-hydrolyzing subunit KdpB by the formation of a transient KdpB/KdpC/ATP ternary complex. The sequence is that of Potassium-transporting ATPase KdpC subunit from Dechloromonas aromatica (strain RCB).